Reading from the N-terminus, the 871-residue chain is Isoleucine--tRNA ligase (871 aa).

Residues 57–67 (PYANGNLHMGH) carry the 'HIGH' region motif. Glu554 contributes to the L-isoleucyl-5'-AMP binding site. Residues 595–599 (KMSKS) carry the 'KMSKS' region motif. Lys598 is a binding site for ATP.

It belongs to the class-I aminoacyl-tRNA synthetase family. IleS type 1 subfamily. In terms of assembly, monomer.

The protein resides in the cytoplasm. The enzyme catalyses tRNA(Ile) + L-isoleucine + ATP = L-isoleucyl-tRNA(Ile) + AMP + diphosphate. Its function is as follows. Catalyzes the attachment of isoleucine to tRNA(Ile). As IleRS can inadvertently accommodate and process structurally similar amino acids such as valine, to avoid such errors it has two additional distinct tRNA(Ile)-dependent editing activities. One activity is designated as 'pretransfer' editing and involves the hydrolysis of activated Val-AMP. The other activity is designated 'posttransfer' editing and involves deacylation of mischarged Val-tRNA(Ile). The polypeptide is Isoleucine--tRNA ligase (Staphylococcus epidermidis).